Consider the following 387-residue polypeptide: Mitochondrial import inner membrane translocase subunit TIM50 (387 aa).

A mitochondrion-targeting transit peptide spans 1–26 (MSAVSVYPMCVRASRGLLRLRQGARC). The Mitochondrial matrix segment spans residues 27–100 (STAPPLLDVV…QKENTAYAKK (74 aa)). Residues 61–93 (LQQQQKSQEQPPPEGEDSGHKQDEQGEDKKQKE) are disordered. The segment covering 77-93 (DSGHKQDEQGEDKKQKE) has biased composition (basic and acidic residues). Residues 101-121 (MVLRLAGIMGLGGTVGIVYIF) form a helical membrane-spanning segment. Residues 122–387 (GSNSVDEQGN…AGRFWSRKQQ (266 aa)) lie on the Mitochondrial intermembrane side of the membrane. In terms of domain architecture, FCP1 homology spans 178-321 (YYQPPYTLVL…YDLAAFLKTI (144 aa)).

The protein belongs to the TIM50 family. As to quaternary structure, component of the TIM23 complex at least composed of timm23, timm17 and timm50.

Its subcellular location is the mitochondrion inner membrane. In terms of biological role, essential component of the TIM23 complex, a complex that mediates the translocation of transit peptide-containing proteins across the mitochondrial inner membrane. The protein is Mitochondrial import inner membrane translocase subunit TIM50 (timm50) of Danio rerio (Zebrafish).